Here is a 208-residue protein sequence, read N- to C-terminus: Ribosomal RNA small subunit methyltransferase G (208 aa).

Residues Gly74, Leu79, Val125–Glu126, and Arg140 contribute to the S-adenosyl-L-methionine site.

It belongs to the methyltransferase superfamily. RNA methyltransferase RsmG family.

It is found in the cytoplasm. The catalysed reaction is guanosine(527) in 16S rRNA + S-adenosyl-L-methionine = N(7)-methylguanosine(527) in 16S rRNA + S-adenosyl-L-homocysteine. Functionally, specifically methylates the N7 position of guanine in position 527 of 16S rRNA. The protein is Ribosomal RNA small subunit methyltransferase G of Shewanella denitrificans (strain OS217 / ATCC BAA-1090 / DSM 15013).